Here is a 428-residue protein sequence, read N- to C-terminus: Kynureninase (428 aa).

Pyridoxal 5'-phosphate-binding positions include Thr-104, Thr-105, 132–135 (FPSD), Asp-213, His-216, and Tyr-238. Lys-239 bears the N6-(pyridoxal phosphate)lysine mark. Pyridoxal 5'-phosphate contacts are provided by Trp-267 and Thr-295.

Belongs to the kynureninase family. In terms of assembly, homodimer. Requires pyridoxal 5'-phosphate as cofactor.

It carries out the reaction L-kynurenine + H2O = anthranilate + L-alanine + H(+). The enzyme catalyses 3-hydroxy-L-kynurenine + H2O = 3-hydroxyanthranilate + L-alanine + H(+). It participates in amino-acid degradation; L-kynurenine degradation; L-alanine and anthranilate from L-kynurenine: step 1/1. It functions in the pathway cofactor biosynthesis; NAD(+) biosynthesis; quinolinate from L-kynurenine: step 2/3. In terms of biological role, catalyzes the cleavage of L-kynurenine (L-Kyn) and L-3-hydroxykynurenine (L-3OHKyn) into anthranilic acid (AA) and 3-hydroxyanthranilic acid (3-OHAA), respectively. This is Kynureninase from Bacillus cereus (strain ZK / E33L).